We begin with the raw amino-acid sequence, 21 residues long: AKTENKTVTVRQTASPIXXXK.

Over residues 1–15 (AKTENKTVTVRQTAS) the composition is skewed to polar residues. Residues 1-21 (AKTENKTVTVRQTASPIXXXK) are disordered.

Belongs to the universal ribosomal protein uL30 family. In terms of assembly, part of the 50S ribosomal subunit.

This Brevundimonas diminuta (Pseudomonas diminuta) protein is Large ribosomal subunit protein uL30 (rpmD).